Consider the following 193-residue polypeptide: Acyl carrier protein phosphodiesterase (193 aa).

This sequence belongs to the AcpH family.

The enzyme catalyses holo-[ACP] + H2O = apo-[ACP] + (R)-4'-phosphopantetheine + H(+). Converts holo-ACP to apo-ACP by hydrolytic cleavage of the phosphopantetheine prosthetic group from ACP. The protein is Acyl carrier protein phosphodiesterase of Salmonella paratyphi A (strain ATCC 9150 / SARB42).